The chain runs to 312 residues: uncharacterized protein (312 aa).

8 helical membrane-spanning segments follow: residues 4–24 (IFLA…KVIF), 45–65 (LITP…PLVL), 75–95 (IAGI…AVML), 117–137 (VILA…NLIW), 171–191 (GLGV…IQFL), 217–237 (TSMT…GVMI), 253–275 (AFIF…PLGI), and 280–299 (LLLI…AHTW).

The protein resides in the cell membrane. This is an uncharacterized protein from Bacillus subtilis (strain 168).